Reading from the N-terminus, the 53-residue chain is UPF0391 membrane protein Patl_1732 (53 aa).

The next 2 helical transmembrane spans lie at 4–24 (WAVI…GGIA) and 28–48 (AGIA…SVVM).

The protein belongs to the UPF0391 family.

The protein localises to the cell membrane. The protein is UPF0391 membrane protein Patl_1732 of Pseudoalteromonas atlantica (strain T6c / ATCC BAA-1087).